The primary structure comprises 464 residues: Glutamate--tRNA ligase (464 aa).

The 'HIGH' region signature appears at 11 to 21 (PSPTGFIHLGN). The short motif at 243-247 (KMSKR) is the 'KMSKS' region element. Lys-246 contacts ATP.

The protein belongs to the class-I aminoacyl-tRNA synthetase family. Glutamate--tRNA ligase type 1 subfamily. As to quaternary structure, monomer.

The protein localises to the cytoplasm. It carries out the reaction tRNA(Glu) + L-glutamate + ATP = L-glutamyl-tRNA(Glu) + AMP + diphosphate. Catalyzes the attachment of glutamate to tRNA(Glu) in a two-step reaction: glutamate is first activated by ATP to form Glu-AMP and then transferred to the acceptor end of tRNA(Glu). The chain is Glutamate--tRNA ligase from Polaromonas naphthalenivorans (strain CJ2).